An 877-amino-acid polypeptide reads, in one-letter code: SRP-independent targeting protein 1 (877 aa).

5 positions are modified to phosphoserine: serine 309, serine 310, serine 311, serine 332, and serine 334. 3 disordered regions span residues leucine 369–aspartate 414, aspartate 446–serine 521, and lysine 550–phenylalanine 579. Positions arginine 389–proline 402 are enriched in low complexity. The stretch at serine 412–asparagine 441 forms a coiled coil. Basic and acidic residues predominate over residues aspartate 447–tyrosine 462. Over residues tyrosine 470–glycine 501 the composition is skewed to acidic residues. 2 stretches are compositionally biased toward polar residues: residues leucine 510–serine 521 and proline 551–phenylalanine 579. Residues lysine 668 and lysine 670 each participate in a glycyl lysine isopeptide (Lys-Gly) (interchain with G-Cter in ubiquitin) cross-link. Serine 692, serine 694, and serine 706 each carry phosphoserine. The tract at residues serine 773–phenylalanine 815 is disordered. Over residues aspartate 805–phenylalanine 815 the composition is skewed to low complexity. Residue serine 841 is modified to Phosphoserine.

As to quaternary structure, interacts with ENV10/SND2.

It localises to the cytoplasm. Its function is as follows. Functions in the SND pathway, a SRP (signal recognition particle) and GET (guided entry of tail-anchored proteins) independent pathway for targeting a broad range of substrate proteins to the endoplasmic reticulum. SND functions in parallel to GET in targeting proteins with downstream hydrophobic motifs. The chain is SRP-independent targeting protein 1 from Saccharomyces cerevisiae (strain ATCC 204508 / S288c) (Baker's yeast).